Reading from the N-terminus, the 338-residue chain is Taste receptor type 2 member 39 (338 aa).

The Extracellular segment spans residues 1–30 (MLGRCFPPDTKEKQQLRMTKLCDPAESELS). The helical transmembrane segment at 31-51 (PFLITLILAVLLAEYLIGIIA) threads the bilayer. The Cytoplasmic portion of the chain corresponds to 52-74 (NGFIMAIHAAEWVQNKAVSTSGR). The chain crosses the membrane as a helical span at residues 75–95 (ILVFLSVSRIALQSLMMLEIT). The Extracellular portion of the chain corresponds to 96–116 (ISSTSLSFYSEDAVYYAFKIS). A helical transmembrane segment spans residues 117–137 (FIFLNFCSLWFAAWLSFFYFV). Residues 138-156 (KIANFSYPLFLKLRWRITG) lie on the Cytoplasmic side of the membrane. Residues 157–177 (LIPWLLWLSVFISFSHSMFCI) form a helical membrane-spanning segment. Residues 178–205 (NIXTVYCNNSFPIHSSNSTKKTYLSEIN) lie on the Extracellular side of the membrane. 2 N-linked (GlcNAc...) asparagine glycosylation sites follow: N185 and N194. A helical transmembrane segment spans residues 206–226 (VVGLAFFFNLGIVTPLIMFIL). At 227–262 (TATLLILSLKRHTLHMGSNATGSNDPSMEAHMGAIK) the chain is on the cytoplasmic side. The chain crosses the membrane as a helical span at residues 263–283 (ATSYFLILYIFNAVALFIYLS). The Extracellular portion of the chain corresponds to 284 to 291 (NMFDINSL). A helical membrane pass occupies residues 292 to 312 (WNNLCQIIMAAYPASHSILLI). The Cytoplasmic segment spans residues 313 to 338 (QDNPGLRRAWKRLQLRLHLYPKEWTL).

It belongs to the G-protein coupled receptor T2R family.

Its subcellular location is the membrane. Functionally, receptor that may play a role in the perception of bitterness and is gustducin-linked. May play a role in sensing the chemical composition of the gastrointestinal content. The activity of this receptor may stimulate alpha gustducin, mediate PLC-beta-2 activation and lead to the gating of TRPM5. This Gorilla gorilla gorilla (Western lowland gorilla) protein is Taste receptor type 2 member 39 (TAS2R39).